The chain runs to 591 residues: Aspartate--tRNA(Asp/Asn) ligase (591 aa).

Glutamate 170 provides a ligand contact to L-aspartate. The interval 194–197 (QLFK) is aspartate. L-aspartate is bound at residue arginine 216. Residues 216 to 218 (RDE) and glutamine 225 each bind ATP. Histidine 448 contacts L-aspartate. Position 482 (glutamate 482) interacts with ATP. An L-aspartate-binding site is contributed by arginine 489. An ATP-binding site is contributed by 534-537 (GWDR). Positions 559–591 (GGVDPLTDAPAPITEQQRKESGIDVKPEPSKPH) are disordered. The segment covering 574–591 (QQRKESGIDVKPEPSKPH) has biased composition (basic and acidic residues).

It belongs to the class-II aminoacyl-tRNA synthetase family. Type 1 subfamily. As to quaternary structure, homodimer.

It is found in the cytoplasm. It carries out the reaction tRNA(Asx) + L-aspartate + ATP = L-aspartyl-tRNA(Asx) + AMP + diphosphate. In terms of biological role, aspartyl-tRNA synthetase with relaxed tRNA specificity since it is able to aspartylate not only its cognate tRNA(Asp) but also tRNA(Asn). Reaction proceeds in two steps: L-aspartate is first activated by ATP to form Asp-AMP and then transferred to the acceptor end of tRNA(Asp/Asn). This is Aspartate--tRNA(Asp/Asn) ligase from Mycobacterium avium (strain 104).